Reading from the N-terminus, the 210-residue chain is Nucleoside triphosphate pyrophosphatase (210 aa).

The active-site Proton acceptor is the aspartate 79.

The protein belongs to the Maf family. A divalent metal cation is required as a cofactor.

The protein resides in the cytoplasm. The enzyme catalyses a ribonucleoside 5'-triphosphate + H2O = a ribonucleoside 5'-phosphate + diphosphate + H(+). It catalyses the reaction a 2'-deoxyribonucleoside 5'-triphosphate + H2O = a 2'-deoxyribonucleoside 5'-phosphate + diphosphate + H(+). Nucleoside triphosphate pyrophosphatase. May have a dual role in cell division arrest and in preventing the incorporation of modified nucleotides into cellular nucleic acids. This Mycolicibacterium paratuberculosis (strain ATCC BAA-968 / K-10) (Mycobacterium paratuberculosis) protein is Nucleoside triphosphate pyrophosphatase.